The following is a 503-amino-acid chain: Transcription termination/antitermination protein NusA (503 aa).

Positions 140–206 (GELVIGVVKR…RGPQLLVSRT (67 aa)) constitute an S1 motif domain. Positions 308–374 (SHTMDIAVNK…FMEKLDVDEE (67 aa)) constitute a KH domain.

Belongs to the NusA family. Monomer. Binds directly to the core enzyme of the DNA-dependent RNA polymerase and to nascent RNA.

The protein localises to the cytoplasm. Participates in both transcription termination and antitermination. This is Transcription termination/antitermination protein NusA from Coxiella burnetii (strain RSA 493 / Nine Mile phase I).